We begin with the raw amino-acid sequence, 86 residues long: METSHSFGAKVLIGAIRIYQLMISPLIGPRCRFVPTCSCYGIQAVKTHGVVKGSWLTVKRILKCHPFNVGGYDPVPPKINNNKENE.

This sequence belongs to the UPF0161 family.

The protein localises to the cell inner membrane. Functionally, could be involved in insertion of integral membrane proteins into the membrane. This Histophilus somni (strain 129Pt) (Haemophilus somnus) protein is Putative membrane protein insertion efficiency factor.